The chain runs to 511 residues: MFDIDFGILFPISWEQSPIFLAVGLIFAFATLSPWLRSGERLINGREGFEILWTNAKKRYQTKGRSVMEAGFSKYNDSFYMMTDSGTEMVLHPRYVDEIRNDPRLDFHRYMKTKGGEINRDLIQTKLTRSVGRLIGSISAEIEDALHNRWEEGEGEYEEYLLVLPPAEMHTEWHEIVLLSVMIPVVAQGVSKMFVGDPLCRNKDWIGMILRHTRSVQTALRSLRLWPYFLRPLAARFLPTCRQVTAEIEEARRIINPVLEKKRAEKLAMIQKGEKPPEPNTYMDWLEESDKDEFYDPVVAQLKISMAAIHATSDLLSQTIFSLCDSPELVKELRAEAVSVIGAYGWGKEAIYNLKLMDSVLKETQRLKPMQINLTRLALDRIKLSDGTVIPRGSKVLISCHNMWDSNVYPNANQYDGHRFYKLRQRAGMENSAQLSTPSPDHLGFGLGMYACPGRHIASTVMKVTLCHILLKYDFELAEGCTPRVIEYGSFLLADPTARVSIRRRKEEIQL.

Residues 8 to 28 form a helical membrane-spanning segment; that stretch reads ILFPISWEQSPIFLAVGLIFA. 2 N-linked (GlcNAc...) asparagine glycosylation sites follow: N76 and N373. C452 is a heme binding site.

Belongs to the cytochrome P450 family. Heme serves as cofactor.

The protein localises to the membrane. It functions in the pathway secondary metabolite biosynthesis. Its function is as follows. Cytochrome P450 monooxygenase; part of the gene cluster that mediates the biosynthesis of the indole diterpenes nodulisporic acids (NA). Nodulisporic acid A (NAA) and its chemically modified derivatives are of particular significance because of their highly potent insecticidal activity against blood-feeding arthropods and lack of observable adverse effects on mammals, in particular the tremogenicity associated with the paspaline-derived IDTs is not observed. The geranylgeranyl diphosphate (GGPP) synthase ggs1, localized outside of the cluster, is proposed to catalyze the first step in nodulisporic acid biosynthesis via conversion of farnesyl pyrophosphate and isopentyl pyrophosphate into geranylgeranyl pyrophosphate (GGPP). Condensation of indole-3-glycerol phosphate with GGPP by the prenyl transferase nodC then forms 3-geranylgeranylindole (3-GGI). Epoxidation by the FAD-dependent monooxygenase nodM leads to a single-epoxidized-GGI that is substrate of the terpene cyclase nodB for cyclization to yield emindole SB. The terminal methyl carbon, C28, of emindole SB is then oxidized by the cytochrome P450 monooxygenase nodW to produce nodulisporic acid F (NAF), the pentacyclic core of NAA. NAF is converted to nodulisporic acid E (NAE) via prenylation. This step is probably performed by one of the indole diterpene prenyltransferases nodD1 or nodD2. Several oxidation steps performed by the FAD-linked oxidoreductase nodO and one of the cytochrome P450 monooxygenase nodR, nodX or nodZ further convert NAE to nodulisporic acid D (NAD). NAD is substrate of cytochrome P450 monooxygenase nodJ to produce the precursor of nodulisporic acid C (NAC), converted to NAC by one of the indole diterpene prenyltransferases nodD1 or nodD2. The FAD-dependent monooxygenase nodY2 then oxidizes NAC to nodulisporic acid B (NAB). Finally NAB is converted to NAA by one of the cytochrome P450 monooxygenases nodR, nodX or nodZ. This Hypoxylon pulicicidum protein is Cytochrome P450 monooxygenase nodR.